Consider the following 452-residue polypeptide: C4-dicarboxylate transport protein 1 (452 aa).

A run of 9 helical transmembrane segments spans residues 18 to 38 (FQVVCAVIAGVALGYFYPSVG), 51 to 71 (LIKMMIAPIIFCTVVVGIAGM), 83 to 103 (LALLYFEVVSTFALIIGLLLV), 151 to 171 (AFAKGEILQVLLLAILFGFAL), 191 to 211 (VLFTIVGFIMKVAPIGAFGAM), 229 to 249 (LMGAFYLTCLIFIFGVLGAIA), 304 to 324 (GYSFNLDGTSIYLTMAAVFIA), 337 to 357 (ITLLGVLLLTSKGAAGVTGSG), and 359 to 379 (IVLAATLSAVGTVPVAGLALI). The disordered stretch occupies residues 426–452 (WEEAQEPERVLDKKTEHMPVSAMSDAG). The segment covering 431–442 (EPERVLDKKTEH) has biased composition (basic and acidic residues).

It belongs to the dicarboxylate/amino acid:cation symporter (DAACS) (TC 2.A.23) family.

The protein resides in the cell inner membrane. Responsible for the transport of dicarboxylates such as succinate, fumarate, and malate from the periplasm across the membrane. In Polaromonas naphthalenivorans (strain CJ2), this protein is C4-dicarboxylate transport protein 1.